Reading from the N-terminus, the 512-residue chain is Alanine--glyoxylate aminotransferase 2, mitochondrial (512 aa).

The N-terminal 39 residues, 1–39 (MSLAWRTLQKAFYLETSLRILQMRPSLSCASRIYVPKLT), are a transit peptide targeting the mitochondrion. Position 55 is an N6-acetyllysine (K55). K69 carries the N6-acetyllysine; alternate modification. Residue K69 is modified to N6-succinyllysine; alternate. Residue K82 is modified to N6-acetyllysine. At K260 the chain carries N6-acetyllysine; alternate. K260 is subject to N6-succinyllysine; alternate. K302 carries the post-translational modification N6-succinyllysine. The residue at position 348 (K348) is an N6-(pyridoxal phosphate)lysine. An N6-acetyllysine; alternate mark is found at K415 and K418. 2 positions are modified to N6-succinyllysine; alternate: K415 and K418. K452 carries the post-translational modification N6-acetyllysine.

This sequence belongs to the class-III pyridoxal-phosphate-dependent aminotransferase family. As to quaternary structure, homotetramer. Pyridoxal 5'-phosphate is required as a cofactor. Expressed in the liver, lung and kidney.

The protein resides in the mitochondrion. It catalyses the reaction glyoxylate + L-alanine = glycine + pyruvate. The enzyme catalyses (R)-3-amino-2-methylpropanoate + pyruvate = 2-methyl-3-oxopropanoate + L-alanine. The catalysed reaction is 3-oxopropanoate + L-alanine = beta-alanine + pyruvate. It carries out the reaction 2-oxobutanoate + L-alanine = (2S)-2-aminobutanoate + pyruvate. It catalyses the reaction N(omega),N(omega)-dimethyl-L-arginine + pyruvate = 5-(3,3-dimethylguanidino)-2-oxopentanoate + L-alanine. The enzyme catalyses N(omega),N('omega)-dimethyl-L-arginine + pyruvate = 5-(3,3'-dimethylguanidino)-2-oxopentanoate + L-alanine. The catalysed reaction is N(omega),N(omega)-dimethyl-L-arginine + glyoxylate = 5-(3,3-dimethylguanidino)-2-oxopentanoate + glycine. It carries out the reaction N(omega),N('omega)-dimethyl-L-arginine + glyoxylate = 5-(3,3'-dimethylguanidino)-2-oxopentanoate + glycine. It catalyses the reaction N(omega)-methyl-L-arginine + pyruvate = 5-(3-methylguanidino)-2-oxopentanoate + L-alanine. The enzyme catalyses N(omega)-methyl-L-arginine + glyoxylate = 5-(3-methylguanidino)-2-oxopentanoate + glycine. The catalysed reaction is L-ornithine + pyruvate = 5-amino-2-oxopentanoate + L-alanine. It carries out the reaction L-ornithine + glyoxylate = 5-amino-2-oxopentanoate + glycine. It catalyses the reaction (2S)-2-aminobutanoate + glyoxylate = 2-oxobutanoate + glycine. The enzyme catalyses N(omega),N(omega)-dimethyl-L-arginine + oxaloacetate = 5-(3,3-dimethylguanidino)-2-oxopentanoate + L-aspartate. The catalysed reaction is oxaloacetate + L-alanine = L-aspartate + pyruvate. It carries out the reaction N(omega),N(omega)-dimethyl-L-arginine + 2-oxobutanoate = 5-(3,3-dimethylguanidino)-2-oxopentanoate + (2S)-2-aminobutanoate. It catalyses the reaction 2-oxopentanoate + N(omega),N(omega)-dimethyl-L-arginine = 5-(3,3-dimethylguanidino)-2-oxopentanoate + L-2-aminopentanoate. The enzyme catalyses 2-oxohexanoate + N(omega),N(omega)-dimethyl-L-arginine = L-2-aminohexanoate + 5-(3,3-dimethylguanidino)-2-oxopentanoate. With respect to regulation, inhibited by 5-fluorouracil and 6-fluorouracil. Inhibited by phenylhydrazine, hydroxylamine, l-amino-L-proline, para-chloromercuribenzoate and HgCl2. In terms of biological role, multifunctional aminotransferase with a broad substrate specificity. Catalyzes the conversion of glyoxylate to glycine using alanine as the amino donor. Catalyzes metabolism of not L- but the D-isomer of D-beta-aminoisobutyric acid to generate 2-methyl-3-oxopropanoate and alanine. Catalyzes the transfer of the amino group from beta-alanine to pyruvate to yield L-alanine and 3-oxopropanoate. Can metabolize NG-monomethyl-L-arginine (NMMA), asymmetric NG,NG-dimethyl-L-arginine (ADMA) and symmetric NG,N'G-dimethyl-L-arginine (SDMA). ADMA is a potent inhibitor of nitric-oxide (NO) synthase, and this activity provides mechanism through which the kidney regulates blood pressure. The sequence is that of Alanine--glyoxylate aminotransferase 2, mitochondrial (Agxt2) from Rattus norvegicus (Rat).